A 290-amino-acid polypeptide reads, in one-letter code: MKKEINFLGKRVRRVFMILSLLFVIIGMYFFFTKGLNYSIDFQSGSVIYYKLSSPLNSNQIANLRDIARSFYSKSTIQTGSNGKEVWIRTKFLEENELKRLTSEVEKVIVKYEGREITTIEPTISRELREKAILAAVLAIIVMLVYITVRFRFDFAISAIINEAFVLLATISIFAISQWEVSPSFIAAILTLLGYAINDNIIVFDRIRENSKKYPKEDFTIIANRSINQTLARTLYTVITTLLAITPLLIWGGVVLRPFILAIYLGIIIGTYSTIYIASAILCEWRELQK.

A run of 6 helical transmembrane segments spans residues valine 15 to glycine 35, lysine 131 to phenylalanine 151, alanine 156 to isoleucine 176, serine 184 to phenylalanine 204, threonine 234 to leucine 256, and isoleucine 260 to leucine 282.

This sequence belongs to the SecD/SecF family. SecF subfamily. As to quaternary structure, forms a complex with SecD. Part of the essential Sec protein translocation apparatus which comprises SecA, SecYEG and auxiliary proteins SecDF. Other proteins may also be involved.

The protein resides in the cell inner membrane. Functionally, part of the Sec protein translocase complex. Interacts with the SecYEG preprotein conducting channel. SecDF uses the proton motive force (PMF) to complete protein translocation after the ATP-dependent function of SecA. The protein is Protein translocase subunit SecF of Dictyoglomus turgidum (strain DSM 6724 / Z-1310).